A 317-amino-acid chain; its full sequence is MQNETRSLWPHKDLLDVDQLSKDELLHLLDTAAQFHEINRRPVKKVPTLKGKSVILFFAEPSTRTKTSFDVAGKRLSADTFSLAKSGSSLQKGESLKDTALTLEAMNPDVLVIRHSSSGAARFLADRLACGVVNAGDGWHAHPTQALLDCYSLRQVWGDTFEGRTLCILGDIAHSRVARSNVKLLTSLGVRVRLCAPRTLLPAGVGNWPVEVFTDLDAAVRDADAVMCLRLQLERQQAGLLPDLREYSNRYCLTPRRLELAKPEARVLHPGPMNRGLEIASSIADAPASLVLDQVAAGVATRMAILFLLATRTDGGR.

R64 and T65 together coordinate carbamoyl phosphate. K92 provides a ligand contact to L-aspartate. Residues R114, H142, and Q145 each coordinate carbamoyl phosphate. Residues R176 and R230 each contribute to the L-aspartate site. G271 and P272 together coordinate carbamoyl phosphate.

The protein belongs to the aspartate/ornithine carbamoyltransferase superfamily. ATCase family. Heterododecamer (2C3:3R2) of six catalytic PyrB chains organized as two trimers (C3), and six regulatory PyrI chains organized as three dimers (R2).

The catalysed reaction is carbamoyl phosphate + L-aspartate = N-carbamoyl-L-aspartate + phosphate + H(+). It participates in pyrimidine metabolism; UMP biosynthesis via de novo pathway; (S)-dihydroorotate from bicarbonate: step 2/3. Its function is as follows. Catalyzes the condensation of carbamoyl phosphate and aspartate to form carbamoyl aspartate and inorganic phosphate, the committed step in the de novo pyrimidine nucleotide biosynthesis pathway. The sequence is that of Aspartate carbamoyltransferase catalytic subunit from Nitratidesulfovibrio vulgaris (strain DP4) (Desulfovibrio vulgaris).